The following is a 92-amino-acid chain: Probable Fe(2+)-trafficking protein (92 aa).

Belongs to the Fe(2+)-trafficking protein family.

Functionally, could be a mediator in iron transactions between iron acquisition and iron-requiring processes, such as synthesis and/or repair of Fe-S clusters in biosynthetic enzymes. This chain is Probable Fe(2+)-trafficking protein, found in Shewanella woodyi (strain ATCC 51908 / MS32).